We begin with the raw amino-acid sequence, 515 residues long: Bifunctional purine biosynthesis protein PurH (515 aa).

Residues M1–V145 enclose the MGS-like domain.

It belongs to the PurH family.

It catalyses the reaction (6R)-10-formyltetrahydrofolate + 5-amino-1-(5-phospho-beta-D-ribosyl)imidazole-4-carboxamide = 5-formamido-1-(5-phospho-D-ribosyl)imidazole-4-carboxamide + (6S)-5,6,7,8-tetrahydrofolate. The enzyme catalyses IMP + H2O = 5-formamido-1-(5-phospho-D-ribosyl)imidazole-4-carboxamide. Its pathway is purine metabolism; IMP biosynthesis via de novo pathway; 5-formamido-1-(5-phospho-D-ribosyl)imidazole-4-carboxamide from 5-amino-1-(5-phospho-D-ribosyl)imidazole-4-carboxamide (10-formyl THF route): step 1/1. It participates in purine metabolism; IMP biosynthesis via de novo pathway; IMP from 5-formamido-1-(5-phospho-D-ribosyl)imidazole-4-carboxamide: step 1/1. The polypeptide is Bifunctional purine biosynthesis protein PurH (Streptococcus pneumoniae (strain JJA)).